We begin with the raw amino-acid sequence, 229 residues long: MATKIFLASPVISATRTPIVPKAIASRLGTSLAAALAATSVLTMVPVLPAAGEGNQTYKIYYGTAASAANYGGYGGNSDRKTSAEYVYDVPEGWKERLVSKVEKGTNGTDSEFYNPKKKTEKEYLTFLAGFRQLAPRDVILNNLALSDVELQDLIAGADKVVSEERKDETGQVYYLYEIDGVGKHSLITVTCSKNRLYAHFVNAPAPEWNRDHDTLTHLRDSFKTVSSS.

Its subcellular location is the plastid. It is found in the chloroplast thylakoid lumen. The protein is Thylakoid lumenal 19 kDa protein, chloroplastic of Arabidopsis thaliana (Mouse-ear cress).